The sequence spans 511 residues: 2-isopropylmalate synthase (511 aa).

In terms of domain architecture, Pyruvate carboxyltransferase spans 4–266 (IRIFDTTLRD…ETGIDLSQLY (263 aa)). Mn(2+) is bound by residues D13, H201, H203, and N237. Residues 391-511 (VLEKIRVVSG…IAANARAQKN (121 aa)) form a regulatory domain region.

Belongs to the alpha-IPM synthase/homocitrate synthase family. LeuA type 1 subfamily. Homodimer. Requires Mn(2+) as cofactor.

It is found in the cytoplasm. It catalyses the reaction 3-methyl-2-oxobutanoate + acetyl-CoA + H2O = (2S)-2-isopropylmalate + CoA + H(+). It participates in amino-acid biosynthesis; L-leucine biosynthesis; L-leucine from 3-methyl-2-oxobutanoate: step 1/4. Catalyzes the condensation of the acetyl group of acetyl-CoA with 3-methyl-2-oxobutanoate (2-ketoisovalerate) to form 3-carboxy-3-hydroxy-4-methylpentanoate (2-isopropylmalate). The sequence is that of 2-isopropylmalate synthase from Acetivibrio thermocellus (strain ATCC 27405 / DSM 1237 / JCM 9322 / NBRC 103400 / NCIMB 10682 / NRRL B-4536 / VPI 7372) (Clostridium thermocellum).